The primary structure comprises 1097 residues: Importin-5 (1097 aa).

An N-acetylalanine modification is found at Ala-2. HEAT repeat units follow at residues 5–38 (AAEQ…NIPG), 43–77 (TFLL…FDEV), 95–122 (MIIQ…NLID), 130–157 (PEGL…IFWN), 167–201 (QHYL…AAFI), 210–246 (LFKH…IADT), 254–289 (HLEA…LSET), 298–350 (TNIV…ACGL), 352–386 (GKLV…SAIG), 390–430 (HQQM…ATDF), 432–472 (PGFQ…FTED), 475–523 (KSLL…ADTA), 525–568 (EKFV…GLAV), 570–615 (KEKF…CKIL), 617–692 (KEFQ…AKEL), 695–737 (GFVE…ARVR), 741–780 (YLTQ…IEVM), 787–853 (NEHF…FSSY), 856–895 (KVLP…IEHC), 903–935 (AEYF…MAQY), 943–983 (FCTE…MKFK), 990–1021 (EEVL…DLIE), 1032–1067 (NTNL…VVRQ), and 1070–1093 (TSGG…IQEL). The Importin N-terminal domain occupies 28–99 (QAEETYENIP…KSELLMIIQM (72 aa)). The interval 325 to 375 (DELEDDDFDSNAVAGESALDRMACGLGGKLVLPMIKEHIMQMLQNPDWKYR) is ran-GTP binding. Ser-827 bears the Phosphoserine mark.

It belongs to the importin beta family. Importin beta-3 subfamily. Interacts with RPS7 and RPL5. Interacts with RPL23A (via BIB domain). Interacts with H2A, H2B, H3 and H4 histones. Interacts with CPEB3; this mediates CPEB3 nuclear import following neuronal stimulation which enhances the interaction in a RAN-regulated manner. Interacts with AIFM2; this interaction likely mediates the translocation of AIFM2 into the nucleus upon oxidative stress. Interacts with STX3 (isoform 3). Interacts with SRP19. In terms of assembly, (Microbial infection) Interacts with HIV-1 Rev.

It localises to the cytoplasm. The protein resides in the nucleus. It is found in the nucleolus. Its function is as follows. Functions in nuclear protein import as nuclear transport receptor. Serves as receptor for nuclear localization signals (NLS) in cargo substrates. Is thought to mediate docking of the importin/substrate complex to the nuclear pore complex (NPC) through binding to nucleoporin and the complex is subsequently translocated through the pore by an energy requiring, Ran-dependent mechanism. At the nucleoplasmic side of the NPC, Ran binds to the importin, the importin/substrate complex dissociates and importin is re-exported from the nucleus to the cytoplasm where GTP hydrolysis releases Ran. The directionality of nuclear import is thought to be conferred by an asymmetric distribution of the GTP- and GDP-bound forms of Ran between the cytoplasm and nucleus. Mediates the nuclear import of ribosomal proteins RPL23A, RPS7 and RPL5. In vitro, mediates nuclear import of H2A, H2B, H3 and H4 histones. Binds to CPEB3 and mediates its nuclear import following neuronal stimulation. In case of HIV-1 infection, binds and mediates the nuclear import of HIV-1 Rev. This Homo sapiens (Human) protein is Importin-5 (IPO5).